The following is a 464-amino-acid chain: ESX-1 secretion system protein EccE1 (464 aa).

2 consecutive transmembrane segments (helical) span residues 11–31 (FTTG…AICM) and 34–54 (DLLW…VLTI).

The protein belongs to the EccE family. In terms of assembly, part of the ESX-1 / type VII secretion system (T7SS), which is composed of cytosolic and membrane components. The ESX-1 membrane complex is composed of EccB1, EccCa1, EccCb1, EccD1 and EccE1.

The protein localises to the cell inner membrane. Part of the ESX-1 / type VII specialized secretion system (T7SS), which exports several proteins including EsxA and EsxB. Plays a role in DNA conjugation, in at least a donor strain. This is ESX-1 secretion system protein EccE1 from Mycolicibacterium smegmatis (strain ATCC 700084 / mc(2)155) (Mycobacterium smegmatis).